The following is a 992-amino-acid chain: Aminopeptidase Q (992 aa).

Over 2-13 (GPPSSSGFYVSR) the chain is Cytoplasmic. The helical; Signal-anchor for type II membrane protein transmembrane segment at 14-34 (AVALLLAALAAALLLALAVLA) threads the bilayer. Residues 35–992 (ALYGRCARVQ…RMTAWLRKNT (958 aa)) lie on the Extracellular side of the membrane. The interval 47–92 (DLHHSGVPDAASSPRGTQEEPLPTWPPRPTREPAGTATPGHWRPPG) is disordered. Asn-133 is a glycosylation site (N-linked (GlcNAc...) asparagine). A substrate-binding site is contributed by Glu-241. 4 N-linked (GlcNAc...) asparagine glycosylation sites follow: Asn-262, Asn-289, Asn-347, and Asn-361. 380–384 (SAMEN) is a substrate binding site. His-416 serves as a coordination point for Zn(2+). Glu-417 serves as the catalytic Proton acceptor. Residues His-420 and Glu-439 each coordinate Zn(2+). The active-site Proton donor is Tyr-505. 8 N-linked (GlcNAc...) asparagine glycosylation sites follow: Asn-555, Asn-584, Asn-602, Asn-609, Asn-655, Asn-811, Asn-850, and Asn-889.

The protein belongs to the peptidase M1 family. Requires Zn(2+) as cofactor. In terms of tissue distribution, expressed in skin. Expression levels do not differ between dark and light skin areas.

It localises to the membrane. Metalloprotease which may be important for placentation by regulating biological activity of key peptides at the embryo-maternal interface. Involved in coat pigmentation patterns. During skin development, may be required to establish the periodicity of tabby markings, initiating a pre-pattern at or before hair follicle development. The polypeptide is Aminopeptidase Q (LVRN) (Felis catus (Cat)).